The chain runs to 327 residues: MYQSLMTVRETQIAIKEVKTFFEDQLAKRLELFRVSAPLFVTKKSGLNDHLNGVERPIEFDMLHSGEELEIVHSLAKWKRFALHEYGYEAGEGLYTNMNAIRRDEELDATHSIYVDQWDWEKIVQKEWRTVDYLQKTVLTIYGIFKDLEDHLFEKYPFLGKYLPEEIVFVTSQELEDKYPELTPKDREHAIAKEHGAVFIIGIGDALRSGEKHDGRAADYDDWKLNGDILFWHPVLQSSFELSSMGIRVDSKSLDEQLTKTGEDFKREYDFHKGILEDVLPLTIGGGIGQSRMCMYFLRKAHIGEVQSSVWPDDLREACKKENIHLF.

This sequence belongs to the class-II aminoacyl-tRNA synthetase family. AsnA subfamily.

It localises to the cytoplasm. The catalysed reaction is L-aspartate + NH4(+) + ATP = L-asparagine + AMP + diphosphate + H(+). It functions in the pathway amino-acid biosynthesis; L-asparagine biosynthesis; L-asparagine from L-aspartate (ammonia route): step 1/1. In Bacillus anthracis (strain A0248), this protein is Aspartate--ammonia ligase.